We begin with the raw amino-acid sequence, 124 residues long: Ribonuclease P protein component (124 aa).

This sequence belongs to the RnpA family. As to quaternary structure, consists of a catalytic RNA component (M1 or rnpB) and a protein subunit.

The enzyme catalyses Endonucleolytic cleavage of RNA, removing 5'-extranucleotides from tRNA precursor.. In terms of biological role, RNaseP catalyzes the removal of the 5'-leader sequence from pre-tRNA to produce the mature 5'-terminus. It can also cleave other RNA substrates such as 4.5S RNA. The protein component plays an auxiliary but essential role in vivo by binding to the 5'-leader sequence and broadening the substrate specificity of the ribozyme. The protein is Ribonuclease P protein component of Mycolicibacterium gilvum (strain PYR-GCK) (Mycobacterium gilvum (strain PYR-GCK)).